A 491-amino-acid chain; its full sequence is Lysine--tRNA ligase (491 aa).

Mg(2+) contacts are provided by Glu398 and Glu405.

The protein belongs to the class-II aminoacyl-tRNA synthetase family. In terms of assembly, homodimer. The cofactor is Mg(2+).

It localises to the cytoplasm. The enzyme catalyses tRNA(Lys) + L-lysine + ATP = L-lysyl-tRNA(Lys) + AMP + diphosphate. The chain is Lysine--tRNA ligase from Mycoplasmopsis synoviae (strain 53) (Mycoplasma synoviae).